The sequence spans 1826 residues: Transcription initiation factor TFIID subunit 1-like (1826 aa).

Disordered regions lie at residues 118 to 141 (DESQ…YDED), 532 to 555 (IPDE…SSLK), and 1252 to 1276 (RLKR…MKER). Over residues 1252 to 1268 (RLKRNQEKEKLKGPPEK) the composition is skewed to basic and acidic residues. The Nuclear localization signal motif lies at 1370 to 1377 (PPKKKRRV). 2 Bromo domains span residues 1395–1503 (RRRT…LKEK) and 1517–1626 (LLDD…ITEY). A disordered region spans residues 1648 to 1826 (AELESLDPMT…SGEHKDGHGK (179 aa)). Residues 1660-1700 (PYTSQPPDMYDTNTSLSTSRDASVFQDESNLSVLDISTATP) are compositionally biased toward polar residues. Composition is skewed to acidic residues over residues 1714 to 1729 (EDSD…EEED), 1740 to 1750 (GDGDLADEEEG), and 1768 to 1783 (EGED…EEGD). Polar residues predominate over residues 1787–1797 (SAIQLSESGSD). Over residues 1817–1826 (SGEHKDGHGK) the composition is skewed to basic and acidic residues.

This sequence belongs to the TAF1 family. As to quaternary structure, can bind directly to TATA-box binding protein (TBP). Interacts (via bromo domains) with acetylated lysine residues on the N-terminus of histone H1.4, H2A, H2B, H3 and H4 (in vitro). Testis specific, expressed apparently in germ cells.

It is found in the nucleus. May act as a functional substitute for TAF1/TAFII250 during male meiosis, when sex chromosomes are transcriptionally silenced. This Homo sapiens (Human) protein is Transcription initiation factor TFIID subunit 1-like (TAF1L).